A 546-amino-acid chain; its full sequence is Chaperonin GroEL (546 aa).

ATP is bound by residues 29–32 (TLGP), K50, 86–90 (DGTTT), G415, and D495. Residues 526–546 (EDNAGGGGMPQGMGGGMPGMM) are disordered. Over residues 529–546 (AGGGGMPQGMGGGMPGMM) the composition is skewed to gly residues.

Belongs to the chaperonin (HSP60) family. As to quaternary structure, forms a cylinder of 14 subunits composed of two heptameric rings stacked back-to-back. Interacts with the co-chaperonin GroES.

It localises to the cytoplasm. It catalyses the reaction ATP + H2O + a folded polypeptide = ADP + phosphate + an unfolded polypeptide.. Its function is as follows. Together with its co-chaperonin GroES, plays an essential role in assisting protein folding. The GroEL-GroES system forms a nano-cage that allows encapsulation of the non-native substrate proteins and provides a physical environment optimized to promote and accelerate protein folding. The polypeptide is Chaperonin GroEL (Christiangramia forsetii (strain DSM 17595 / CGMCC 1.15422 / KT0803) (Gramella forsetii)).